The sequence spans 103 residues: Large ribosomal subunit protein bL21 (103 aa).

This sequence belongs to the bacterial ribosomal protein bL21 family. In terms of assembly, part of the 50S ribosomal subunit. Contacts protein L20.

This protein binds to 23S rRNA in the presence of protein L20. The sequence is that of Large ribosomal subunit protein bL21 from Salmonella agona (strain SL483).